Reading from the N-terminus, the 1135-residue chain is DNA-directed RNA polymerase I subunit RPA2 (1135 aa).

The segment at 1–24 (MDPGSRWRNLPSGPSLKHLTDPSY) is disordered. Arg-180 serves as a coordination point for RNA. Positions 194-208 (IRPKWKTRGPGYTQY) are loop B. The tract at residues 236–247 (LNFIYRKELFFL) is loop A. Asp-367 serves as a coordination point for RNA. Fork loop regions lie at residues 439 to 453 (LRSK…DSGL) and 474 to 489 (RGAD…VRRL). Residue Asp-755 participates in Mg(2+) binding. Lys-890 serves as a coordination point for RNA. The DNA site is built by Arg-1020 and Arg-1036. The residue at position 1051 (Ser-1051) is a Phosphoserine. 4 residues coordinate Zn(2+): Cys-1070, Cys-1073, Cys-1098, and Cys-1101. The segment at 1070–1101 (CVKCGSLLSPLLEKPPPSWSAMRNRKYNCTLC) adopts a C4-type zinc-finger fold.

It belongs to the RNA polymerase beta chain family. In terms of assembly, component of the RNA polymerase I (Pol I) complex consisting of 13 subunits: a ten-subunit catalytic core composed of POLR1A/RPA1, POLR1B/RPA2, POLR1C/RPAC1, POLR1D/RPAC2, POLR1H/RPA12, POLR2E/RPABC1, POLR2F/RPABC2, POLR2H/RPABC3, POLR2K/RPABC4 and POLR2L/RPABC5; a mobile stalk subunit POLR1F/RPA43 protruding from the core and additional subunits homologous to general transcription factors POLR1E/RPA49 and POLR1G/RPA34. Part of Pol I pre-initiation complex (PIC), in which Pol I core assembles with RRN3 and promoter-bound UTBF and SL1/TIF-IB complex. The cofactor is Mg(2+).

It is found in the nucleus. The protein localises to the nucleolus. Its subcellular location is the chromosome. It carries out the reaction RNA(n) + a ribonucleoside 5'-triphosphate = RNA(n+1) + diphosphate. In terms of biological role, catalytic core component of RNA polymerase I (Pol I), a DNA-dependent RNA polymerase which synthesizes ribosomal RNA precursors using the four ribonucleoside triphosphates as substrates. Transcribes 47S pre-rRNAs from multicopy rRNA gene clusters, giving rise to 5.8S, 18S and 28S ribosomal RNAs. Pol I-mediated transcription cycle proceeds through transcription initiation, transcription elongation and transcription termination stages. During transcription initiation, Pol I pre-initiation complex (PIC) is recruited by the selectivity factor 1 (SL1/TIF-IB) complex bound to the core promoter that precedes an rDNA repeat unit. The PIC assembly bends the promoter favoring the formation of the transcription bubble and promoter escape. Once the polymerase has escaped from the promoter it enters the elongation phase during which RNA is actively polymerized, based on complementarity with the template DNA strand. Highly processive, assembles in structures referred to as 'Miller trees' where many elongating Pol I complexes queue and transcribe the same rDNA coding regions. At terminator sequences downstream of the rDNA gene, PTRF interacts with Pol I and halts Pol I transcription leading to the release of the RNA transcript and polymerase from the DNA. Forms Pol I active center together with the largest subunit POLR1A/RPA1. Appends one nucleotide at a time to the 3' end of the nascent RNA, with POLR1A/RPA1 contributing a Mg(2+)-coordinating DxDGD motif, and POLR1B/RPA2 participating in the coordination of a second Mg(2+) ion and providing lysine residues believed to facilitate Watson-Crick base pairing between the incoming nucleotide and the template base. Typically, Mg(2+) ions direct a 5' nucleoside triphosphate to form a phosphodiester bond with the 3' hydroxyl of the preceding nucleotide of the nascent RNA, with the elimination of pyrophosphate. Has proofreading activity: Pauses and backtracks to allow the cleavage of a missincorporated nucleotide via POLR1H/RPA12. High Pol I processivity is associated with decreased transcription fidelity. The polypeptide is DNA-directed RNA polymerase I subunit RPA2 (Homo sapiens (Human)).